We begin with the raw amino-acid sequence, 193 residues long: Ubiquitin-conjugating enzyme E2 E1 (193 aa).

Residues 1–45 (MSDDDSRASTSSSSSSSSNQQTEKEGSTPKKKESKVSMSKNSKLL) are disordered. Ser2 bears the N-acetylserine mark. Over residues 8 to 18 (ASTSSSSSSSS) the composition is skewed to low complexity. Residues 22 to 35 (TEKEGSTPKKKESK) show a composition bias toward basic and acidic residues. Polar residues predominate over residues 36–45 (VSMSKNSKLL). The UBC core domain maps to 47-193 (TSAKRIQKEL…ARQWTKRYAT (147 aa)). Cys131 functions as the Glycyl thioester intermediate in the catalytic mechanism. Lys136 participates in a covalent cross-link: Glycyl lysine isopeptide (Lys-Gly) (interchain with G-Cter in ISG15).

This sequence belongs to the ubiquitin-conjugating enzyme family. In terms of assembly, interacts with RNF14. Post-translationally, ISGylation suppresses ubiquitin E2 enzyme activity. Autoubiquitinated.

Its subcellular location is the nucleus. It carries out the reaction S-ubiquitinyl-[E1 ubiquitin-activating enzyme]-L-cysteine + [E2 ubiquitin-conjugating enzyme]-L-cysteine = [E1 ubiquitin-activating enzyme]-L-cysteine + S-ubiquitinyl-[E2 ubiquitin-conjugating enzyme]-L-cysteine.. The enzyme catalyses S-ubiquitinyl-[E1 ubiquitin-activating enzyme]-L-cysteine + [acceptor protein]-L-lysine = [E1 ubiquitin-activating enzyme]-L-cysteine + N(6)-monoubiquitinyl-[acceptor protein]-L-lysine.. The protein operates within protein modification; protein ubiquitination. Functionally, accepts ubiquitin from the E1 complex and catalyzes its covalent attachment to other proteins. Catalyzes the covalent attachment of ISG15 to other proteins. Mediates the selective degradation of short-lived and abnormal proteins. In vitro also catalyzes 'Lys-48'-linked polyubiquitination. This Mus musculus (Mouse) protein is Ubiquitin-conjugating enzyme E2 E1 (Ube2e1).